Consider the following 747-residue polypeptide: DNA ligase (747 aa).

Residues 33 to 37 (DEEYD), 83 to 84 (SL), and Glu-113 each bind NAD(+). Residue Lys-115 is the N6-AMP-lysine intermediate of the active site. Residues Arg-136, Glu-174, Lys-299, and Lys-323 each contribute to the NAD(+) site. 4 residues coordinate Zn(2+): Cys-417, Cys-420, Cys-436, and Cys-442. Positions 659 to 747 (TGGGVLSGLT…GPGALPEVAE (89 aa)) constitute a BRCT domain.

Belongs to the NAD-dependent DNA ligase family. LigA subfamily. The cofactor is Mg(2+). Requires Mn(2+) as cofactor.

It catalyses the reaction NAD(+) + (deoxyribonucleotide)n-3'-hydroxyl + 5'-phospho-(deoxyribonucleotide)m = (deoxyribonucleotide)n+m + AMP + beta-nicotinamide D-nucleotide.. DNA ligase that catalyzes the formation of phosphodiester linkages between 5'-phosphoryl and 3'-hydroxyl groups in double-stranded DNA using NAD as a coenzyme and as the energy source for the reaction. It is essential for DNA replication and repair of damaged DNA. The chain is DNA ligase from Leifsonia xyli subsp. xyli (strain CTCB07).